A 169-amino-acid chain; its full sequence is Glycine-rich RNA-binding protein 8 (169 aa).

Residues 6–84 enclose the RRM domain; sequence YRCFVGGLAW…RVITVNEAQS (79 aa). Residue Arg47 is modified to ADP-ribosylarginine; by HopU1. The disordered stretch occupies residues 80–99; that stretch reads NEAQSRGSGGGGGGRGGSGG. A compositionally biased stretch (gly residues) spans 86–99; the sequence is GSGGGGGGRGGSGG. Residues 86–168 form a glycine-rich (GR) required for cell-to-cell movement region; that stretch reads GSGGGGGGRG…GGSYGGGGGG (83 aa). Residues 95 to 143 are nuclear targeting sequence (M9); the sequence is GGSGGGYRSGGGGGYSGGGGGGYSGGGGGGYERRSGGYGSGGGGGGRGY. The residue at position 103 (Ser103) is a Phosphoserine. Residues 130–169 form a disordered region; that stretch reads GGYGSGGGGGGRGYGGGGRREGGGYGGGDGGSYGGGGGGW.

Belongs to the GR-RBP family. As to quaternary structure, interacts with TRN1. Binds to small phloem-mobile single-stranded RNAs (ss-sRNA, e.g. small interfering RNA (siRNA) and microRNA (miRNA)) in the phloeme exudate, including viral-derived sRNA (vsiRNA). In terms of processing, ADP-ribosylated by the Pseudomonas syringae type III effector HopU1. ADP-ribosylation reduces the ability of the protein to bind RNA. In terms of tissue distribution, ubiquitous.

Its subcellular location is the cytoplasm. It localises to the nucleus. It is found in the secreted. Its function is as follows. Plays a role in RNA transcription or processing during stress. Binds RNAs and DNAs sequence with a preference to single-stranded nucleic acids. Involved in mRNA alternative splicing of numerous targets by modulating splice site selection. Negatively regulates the circadian oscillations of its own transcript as well as RBG7 transcript. Forms an interlocked post-transcriptional negative feedback loop with the RBG7 autoregulatory circuit. Both proteins negatively autoregulate and reciprocally crossregulate by binding to their pre-mRNAs and promoting unproductive splicing coupled to degradation via the NMD pathway. Target of the Pseudomonas syringae type III effector HopU1. Mediates cell-to-cell trafficking of RNA interference (RNAi) signals (small RNAs (sRNA), e.g. small interfering RNA (siRNA) and microRNA (miRNA)) which regulate growth and development, as well as responses to environmental inputs, including pathogen attack; can compromise zucchini yellow mosaic virus (ZYMV) and tobacco rattle virus (TRV) infections at the early stage. The protein is Glycine-rich RNA-binding protein 8 of Arabidopsis thaliana (Mouse-ear cress).